A 192-amino-acid polypeptide reads, in one-letter code: Peptidyl-tRNA hydrolase (192 aa).

Residue Tyr-18 coordinates tRNA. The Proton acceptor role is filled by His-23. TRNA-binding residues include Phe-69, Asn-71, and Asn-117.

Belongs to the PTH family. As to quaternary structure, monomer.

It is found in the cytoplasm. It carries out the reaction an N-acyl-L-alpha-aminoacyl-tRNA + H2O = an N-acyl-L-amino acid + a tRNA + H(+). Functionally, hydrolyzes ribosome-free peptidyl-tRNAs (with 1 or more amino acids incorporated), which drop off the ribosome during protein synthesis, or as a result of ribosome stalling. Catalyzes the release of premature peptidyl moieties from peptidyl-tRNA molecules trapped in stalled 50S ribosomal subunits, and thus maintains levels of free tRNAs and 50S ribosomes. The chain is Peptidyl-tRNA hydrolase from Neisseria gonorrhoeae (strain ATCC 700825 / FA 1090).